The chain runs to 441 residues: Ribosomal protein uS12 methylthiotransferase RimO (441 aa).

An MTTase N-terminal domain is found at 8–118 (PKIGFVSLGC…VLQHVHHYVP (111 aa)). The [4Fe-4S] cluster site is built by Cys17, Cys53, Cys82, Cys150, Cys154, and Cys157. The region spanning 136–373 (LTPRHYAYLK…MALQQQISAE (238 aa)) is the Radical SAM core domain. One can recognise a TRAM domain in the interval 376 to 441 (QEKVGREILV…DEYDLWGSLV (66 aa)).

Belongs to the methylthiotransferase family. RimO subfamily. [4Fe-4S] cluster is required as a cofactor.

The protein resides in the cytoplasm. It catalyses the reaction L-aspartate(89)-[ribosomal protein uS12]-hydrogen + (sulfur carrier)-SH + AH2 + 2 S-adenosyl-L-methionine = 3-methylsulfanyl-L-aspartate(89)-[ribosomal protein uS12]-hydrogen + (sulfur carrier)-H + 5'-deoxyadenosine + L-methionine + A + S-adenosyl-L-homocysteine + 2 H(+). Functionally, catalyzes the methylthiolation of an aspartic acid residue of ribosomal protein uS12. The sequence is that of Ribosomal protein uS12 methylthiotransferase RimO from Cronobacter sakazakii (strain ATCC BAA-894) (Enterobacter sakazakii).